We begin with the raw amino-acid sequence, 256 residues long: Acetylglutamate kinase (256 aa).

Residues 40-41 (GG), Arg-62, and Asn-153 each bind substrate.

This sequence belongs to the acetylglutamate kinase family. ArgB subfamily.

It localises to the cytoplasm. It carries out the reaction N-acetyl-L-glutamate + ATP = N-acetyl-L-glutamyl 5-phosphate + ADP. The protein operates within amino-acid biosynthesis; L-arginine biosynthesis; N(2)-acetyl-L-ornithine from L-glutamate: step 2/4. Its function is as follows. Catalyzes the ATP-dependent phosphorylation of N-acetyl-L-glutamate. The sequence is that of Acetylglutamate kinase from Bacillus cytotoxicus (strain DSM 22905 / CIP 110041 / 391-98 / NVH 391-98).